Consider the following 148-residue polypeptide: Snaclec B1 (148 aa).

An N-terminal signal peptide occupies residues 1 to 24; it reads MGRIIFVSFGLLVVFLSLSGTGAA. Intrachain disulfides connect C27–C38, C55–C144, and C121–C136. The C-type lectin domain maps to 34 to 145; it reads YDQHCYKVFD…CRLLGHFVCK (112 aa).

It belongs to the snaclec family. Heterodimer; disulfide-linked. In terms of tissue distribution, expressed by the venom gland.

It localises to the secreted. Its function is as follows. Interferes with one step of hemostasis (modulation of platelet aggregation, or coagulation cascade, for example). This Macrovipera lebetinus (Levantine viper) protein is Snaclec B1.